Reading from the N-terminus, the 276-residue chain is Acyl-[acyl-carrier-protein]--UDP-N-acetylglucosamine O-acyltransferase (276 aa).

It belongs to the transferase hexapeptide repeat family. LpxA subfamily. As to quaternary structure, homotrimer.

Its subcellular location is the cytoplasm. The enzyme catalyses a (3R)-hydroxyacyl-[ACP] + UDP-N-acetyl-alpha-D-glucosamine = a UDP-3-O-[(3R)-3-hydroxyacyl]-N-acetyl-alpha-D-glucosamine + holo-[ACP]. It participates in glycolipid biosynthesis; lipid IV(A) biosynthesis; lipid IV(A) from (3R)-3-hydroxytetradecanoyl-[acyl-carrier-protein] and UDP-N-acetyl-alpha-D-glucosamine: step 1/6. Involved in the biosynthesis of lipid A, a phosphorylated glycolipid that anchors the lipopolysaccharide to the outer membrane of the cell. This is Acyl-[acyl-carrier-protein]--UDP-N-acetylglucosamine O-acyltransferase from Gloeothece citriformis (strain PCC 7424) (Cyanothece sp. (strain PCC 7424)).